Here is a 249-residue protein sequence, read N- to C-terminus: MSSVTLTTTTTTTSTPPKPTPKDEPQEQIYTPWRLFIYDIWVLGIVSTLAWGCRISTYLIPLFRSNVGKKHLDIGAGTGYYLNQARISSTTQLTIVDNETHALNVALARCKHPVTQTHGIVTDILQPSPFPETYLTNNDQKFDSVSMYYLLHCLPVPVASKCKIFTHLKKYMTEDGVVHGANVLGKGVRKDNWFARIIRRGCLNHGVFHNEEDNAYEFERALRENFWEVETWVVGSVFVFRAKRPILDA.

Low complexity predominate over residues 1–15 (MSSVTLTTTTTTTST). The tract at residues 1–26 (MSSVTLTTTTTTTSTPPKPTPKDEPQ) is disordered.

The protein belongs to the methyltransferase superfamily.

It catalyses the reaction 2-acetyl-3,4a,8,10,11,12a-hexahydroxy-1,4,4a,5,12,12a-hexahydrotetracene-1,12-dione + S-adenosyl-L-methionine = TAN-1612 + S-adenosyl-L-homocysteine + H(+). Its pathway is secondary metabolite biosynthesis. O-methyltransferase; part of the gene cluster that mediates the biosynthesis of the linear tetracyclic TAN-1612 neuropeptide Y receptor antagonist. The decaketide backbone of TAN-1612 is synthesized by the non-reducing polyketide synthase adaA via condensation of one acetyl-CoA starter unit with 9 malonyl-CoA units. The FAD-dependent monooxygenase adaC then performs hydroxylation at C2 while the polaketide chain is still attached to the NRPKS adaA. The alpha-hydroxylation step at C2 appears to be crucial for the following C18-C1 Claisen cyclization and release of the C9-hydroxyl version of TAN-1612 from the NRPKS adaA, two steps performed by the lactamase-like protein adaB. Finally, the O-methyltransferase adaD performs the C9 O-methylation to complete the biosynthesis of TAN-1612. This is O-methyltransferase adaD from Aspergillus niger.